Reading from the N-terminus, the 98-residue chain is Large ribosomal subunit protein uL23 (98 aa).

The protein belongs to the universal ribosomal protein uL23 family. Part of the 50S ribosomal subunit. Contacts protein L29, and trigger factor when it is bound to the ribosome.

Its function is as follows. One of the early assembly proteins it binds 23S rRNA. One of the proteins that surrounds the polypeptide exit tunnel on the outside of the ribosome. Forms the main docking site for trigger factor binding to the ribosome. This Frankia casuarinae (strain DSM 45818 / CECT 9043 / HFP020203 / CcI3) protein is Large ribosomal subunit protein uL23.